We begin with the raw amino-acid sequence, 608 residues long: MPPETATNPKDARHDGWQTLKRFLPYLWPADNAVLRRRVVGAILMVLLGKATTLALPFAYKKAVDAMTLGGGAQPALTVALAFVLAYALGRFSGVLFDNLRNIVFERVGQDATRHLAENVFARLHKLSLRFHLARRTGEVTKVIERGTKSIDTMLYFLLFNIAPTVIELTAVIVIFWLNFGLGLVTATILAVIAYVWTTRTITEWRTHLREKMNRLDGQALARAVDSLLNYETVKYFGAESREEARYASAARAYADAAVKSENSLGLLNIAQALIVNLLMAGAMAWTVYGWSQGKLTVGDLVFVNTYLTQLFRPLDMLGMVYRTIRQGLIDMAEMFRLIDTHIEVADVPNAPALVVNRPSVTFDNVVFGYDRDREILHGLSFEVAAGSRVAIVGPSGAGKSTIARLLFRFYDPWEGRILIDGQDIAHVTQTSLRAALGIVPQDSVLFNDTIGYNIAYGRDGASRAEVDAAAKGAAIADFIARLPQGYDTEVGERGLKLSGGEKQRVAIARTLVKNPPILLFDEATSALDTRTEQDILSTMRAVASHRTTISIAHRLSTIADSDTILVLDQGRLAEQGSHLDLLRRDGLYAEMWARQAAESAEVSEAAE.

Residues 1–38 lie on the Cytoplasmic side of the membrane; it reads MPPETATNPKDARHDGWQTLKRFLPYLWPADNAVLRRR. A helical membrane pass occupies residues 39 to 60; that stretch reads VVGAILMVLLGKATTLALPFAY. The 289-residue stretch at 39–327 folds into the ABC transmembrane type-1 domain; sequence VVGAILMVLL…LGMVYRTIRQ (289 aa). Over 61–82 the chain is Periplasmic; the sequence is KKAVDAMTLGGGAQPALTVALA. The chain crosses the membrane as a helical span at residues 83–105; that stretch reads FVLAYALGRFSGVLFDNLRNIVF. The Cytoplasmic segment spans residues 106–154; it reads ERVGQDATRHLAENVFARLHKLSLRFHLARRTGEVTKVIERGTKSIDTM. Residues 155 to 178 traverse the membrane as a helical segment; it reads LYFLLFNIAPTVIELTAVIVIFWL. A topological domain (periplasmic) is located at residue asparagine 179. Residues 180–202 form a helical membrane-spanning segment; that stretch reads FGLGLVTATILAVIAYVWTTRTI. The Cytoplasmic segment spans residues 203 to 266; that stretch reads TEWRTHLREK…AAVKSENSLG (64 aa). Glutathione-binding positions include 206–210 and 269–272; these read RTHLR and NIAQ. A helical transmembrane segment spans residues 267–285; sequence LLNIAQALIVNLLMAGAMA. The Periplasmic segment spans residues 286–300; that stretch reads WTVYGWSQGKLTVGD. Residues 301–322 form a helical membrane-spanning segment; the sequence is LVFVNTYLTQLFRPLDMLGMVY. Residue 316–319 participates in glutathione binding; the sequence is DMLG. Topologically, residues 323–608 are cytoplasmic; the sequence is RTIRQGLIDM…ESAEVSEAAE (286 aa). The 235-residue stretch at 361 to 595 folds into the ABC transporter domain; it reads VTFDNVVFGY…DGLYAEMWAR (235 aa). Residues tyrosine 370 and 394–405 each bind ATP; that span reads GPSGAGKSTIAR.

The protein belongs to the ABC transporter superfamily. ABCB family. Heavy Metal importer (TC 3.A.1.210) subfamily. Homodimer.

It is found in the cell inner membrane. In terms of biological role, mediates the ATP-dependent export of glutathione-conjugated substrates, such as heavy metal-glutathione conjugates. ATP hydrolysis is stimulated by glutathione binding. Protects cells against toxic heavy metal ions, such as silver and mercury ions. May also mediate the transport of glutathione-conjugated aromatic hydrocarbons, such as dinitrobenzene. In Novosphingobium aromaticivorans (strain ATCC 700278 / DSM 12444 / CCUG 56034 / CIP 105152 / NBRC 16084 / F199), this protein is ATM1-type heavy metal exporter (atm1).